The following is a 202-amino-acid chain: UMP-CMP kinase 3 (202 aa).

Residue 24–29 (GSGKGT) participates in ATP binding. An NMP region spans residues 44-73 (SAGDLLRAEIKSGSENGTMIQNMIKEGKIV). A ribonucleoside 5'-phosphate-binding positions include Arg-50, 71–73 (KIV), and 98–101 (GFPR). Residue Asn-105 coordinates CMP. The tract at residues 136–144 (GRNQGREDD) is LID. Position 137 (Arg-137) interacts with ATP. A ribonucleoside 5'-phosphate-binding residues include Arg-141 and Arg-152. Position 180 (Lys-180) interacts with ATP.

In terms of assembly, monomer. Mg(2+) serves as cofactor.

The protein localises to the cytoplasm. Its subcellular location is the nucleus. The enzyme catalyses CMP + ATP = CDP + ADP. It catalyses the reaction dCMP + ATP = dCDP + ADP. The catalysed reaction is UMP + ATP = UDP + ADP. Its function is as follows. Catalyzes the phosphorylation of pyrimidine nucleoside monophosphates at the expense of ATP. Plays an important role in de novo pyrimidine nucleotide biosynthesis. Has preference for UMP and CMP as phosphate acceptors. Does not act on dCMP and dUMP. The sequence is that of UMP-CMP kinase 3 (UMK3) from Arabidopsis thaliana (Mouse-ear cress).